A 488-amino-acid chain; its full sequence is Bifunctional protein HldE (488 aa).

Positions 1–332 are ribokinase; sequence MRESFLDTIQ…QELQSQQSAA (332 aa). 208 to 211 lines the ATP pocket; the sequence is NKRE. Asp-277 is an active-site residue. The interval 359–488 is cytidylyltransferase; it reads FTNGCFDLLH…TSNIIRKLAS (130 aa).

This sequence in the N-terminal section; belongs to the carbohydrate kinase PfkB family. It in the C-terminal section; belongs to the cytidylyltransferase family. As to quaternary structure, homodimer.

It catalyses the reaction D-glycero-beta-D-manno-heptose 7-phosphate + ATP = D-glycero-beta-D-manno-heptose 1,7-bisphosphate + ADP + H(+). The enzyme catalyses D-glycero-beta-D-manno-heptose 1-phosphate + ATP + H(+) = ADP-D-glycero-beta-D-manno-heptose + diphosphate. It participates in nucleotide-sugar biosynthesis; ADP-L-glycero-beta-D-manno-heptose biosynthesis; ADP-L-glycero-beta-D-manno-heptose from D-glycero-beta-D-manno-heptose 7-phosphate: step 1/4. The protein operates within nucleotide-sugar biosynthesis; ADP-L-glycero-beta-D-manno-heptose biosynthesis; ADP-L-glycero-beta-D-manno-heptose from D-glycero-beta-D-manno-heptose 7-phosphate: step 3/4. Functionally, catalyzes the phosphorylation of D-glycero-D-manno-heptose 7-phosphate at the C-1 position to selectively form D-glycero-beta-D-manno-heptose-1,7-bisphosphate. Its function is as follows. Catalyzes the ADP transfer from ATP to D-glycero-beta-D-manno-heptose 1-phosphate, yielding ADP-D-glycero-beta-D-manno-heptose. The polypeptide is Bifunctional protein HldE (Methylobacillus flagellatus (strain ATCC 51484 / DSM 6875 / VKM B-1610 / KT)).